Here is a 206-residue protein sequence, read N- to C-terminus: Halorhodopsin (206 aa).

Residues 1–15 (IALAGLSILLFVYMG) traverse the membrane as a helical segment. Topologically, residues 16 to 21 (RNVEDP) are cytoplasmic. The chain crosses the membrane as a helical span at residues 22–45 (RAQLIFVATLMVPLVSISSYTGLV). The Extracellular portion of the chain corresponds to 46–75 (SGLTVGFLEMPAGHALAGMGAGPEGGVFTP). Residues 76–97 (WGRYLTWAFSTPMILIALGLLA) traverse the membrane as a helical segment. The Cytoplasmic portion of the chain corresponds to 98 to 100 (GSN). A helical transmembrane segment spans residues 101-124 (MSKLFTAVVADVGMCITGLAAALT). At 125–127 (TSS) the chain is on the extracellular side. The chain crosses the membrane as a helical span at residues 128–150 (YLLRWVWYGISCAFFVVVLYILL). Residues 151–162 (AEWAKDAEVAGT) are Cytoplasmic-facing. Residues 163-186 (ADIFNTLKVLTVVLWLGYPIFWAL) traverse the membrane as a helical segment. Topologically, residues 187–195 (GAEGLAVLD) are extracellular. Residues 196-206 (IAITSWAYSGM) traverse the membrane as a helical segment.

The protein belongs to the archaeal/bacterial/fungal opsin family.

Its subcellular location is the cell membrane. Functionally, light-driven chloride pump. This Halobacterium halobium (strain mex) protein is Halorhodopsin (hop).